A 416-amino-acid polypeptide reads, in one-letter code: S-adenosylmethionine synthase (416 aa).

Histidine 14 contacts ATP. A Mg(2+)-binding site is contributed by aspartate 16. Glutamate 42 contributes to the K(+) binding site. L-methionine-binding residues include glutamate 55 and glutamine 98. The flexible loop stretch occupies residues 98-108 (QSADINQGVDR). ATP-binding positions include 164 to 166 (DAK), 240 to 241 (KF), aspartate 249, 255 to 256 (RK), alanine 272, and lysine 276. Aspartate 249 provides a ligand contact to L-methionine. Lysine 280 lines the L-methionine pocket.

Belongs to the AdoMet synthase family. In terms of assembly, homotetramer; dimer of dimers. Mg(2+) serves as cofactor. The cofactor is K(+).

The protein resides in the cytoplasm. The enzyme catalyses L-methionine + ATP + H2O = S-adenosyl-L-methionine + phosphate + diphosphate. Its pathway is amino-acid biosynthesis; S-adenosyl-L-methionine biosynthesis; S-adenosyl-L-methionine from L-methionine: step 1/1. Functionally, catalyzes the formation of S-adenosylmethionine (AdoMet) from methionine and ATP. The overall synthetic reaction is composed of two sequential steps, AdoMet formation and the subsequent tripolyphosphate hydrolysis which occurs prior to release of AdoMet from the enzyme. The chain is S-adenosylmethionine synthase from Flavobacterium psychrophilum (strain ATCC 49511 / DSM 21280 / CIP 103535 / JIP02/86).